Reading from the N-terminus, the 526-residue chain is WRKY transcription factor 72A (526 aa).

Basic and acidic residues-rich tracts occupy residues 40–52 (KERK…DDNS) and 60–76 (LTGD…KADM). Disordered regions lie at residues 40–76 (KERK…KADM) and 170–200 (SSTK…QTWP). Residues 62–106 (GDKKDDQLESAKADMEEVMEENQRLKKHLDKIMKDYRNLQMQFHE) adopt a coiled-coil conformation. Residues 170–185 (SSTKSSPSNLSPENSL) show a composition bias toward low complexity. Residues 232–298 (CDTPTMNDGC…YEGTHNHPLP (67 aa)) constitute a DNA-binding region (WRKY).

This sequence belongs to the WRKY group II-b family. Expressed in roots, trichomes and fruits.

It is found in the nucleus. Its function is as follows. Transcription activator involved in the transcriptional regulation of terpene biosynthesis in glandular trichomes. Binds to the promoter of the linalool synthase TPS5 and promotes TPS5 gene transactivation. In association with WRKY72B, contributes to basal defense against root-knot nematodes (RKNs) and potato aphids, as well as Mi-1-mediated gene-for-gene resistance to these pests. Both WRKY72A and WRKY72B are not required for gene-for-gene resistance mediated by Pto, another tomato R gene. In Solanum lycopersicum (Tomato), this protein is WRKY transcription factor 72A.